We begin with the raw amino-acid sequence, 397 residues long: Probable sugar efflux transporter (397 aa).

The next 12 membrane-spanning stretches (helical) occupy residues 15–35 (VVTL…PVGL), 51–71 (GIML…FMLL), 81–101 (LICL…AWSF), 103–123 (VLVI…SITA), 136–156 (AQAL…GLPV), 170–190 (FLAI…LLPL), 209–229 (PALM…YTAY), 246–266 (FATV…VIFG), 273–293 (ASVL…LLMP), 301–321 (LAIL…GMQV), 333–353 (VAMS…ALVG), and 364–384 (DIGY…VIIF).

This sequence belongs to the major facilitator superfamily. SotB (TC 2.A.1.2) family.

The protein localises to the cell inner membrane. Its function is as follows. Involved in the efflux of sugars. The physiological role may be the reduction of the intracellular concentration of toxic sugars or sugar metabolites. The chain is Probable sugar efflux transporter from Escherichia fergusonii (strain ATCC 35469 / DSM 13698 / CCUG 18766 / IAM 14443 / JCM 21226 / LMG 7866 / NBRC 102419 / NCTC 12128 / CDC 0568-73).